The chain runs to 198 residues: V-type proton ATPase subunit E (198 aa).

The protein belongs to the V-ATPase E subunit family.

Its function is as follows. Produces ATP from ADP in the presence of a proton gradient across the membrane. In Borrelia recurrentis (strain A1), this protein is V-type proton ATPase subunit E.